The chain runs to 439 residues: Acyl-coenzyme A thioesterase 9, mitochondrial (439 aa).

A mitochondrion-targeting transit peptide spans 1-21; it reads MKRAAIRLWTLNKGLLTHGRG. HotDog ACOT-type domains lie at 85 to 209 and 289 to 401; these read SYIE…RDSE and EDTK…EKEV. K102 carries the post-translational modification N6-acetyllysine.

This sequence belongs to the acyl coenzyme A hydrolase family. In terms of assembly, interacts with NYAP1, NYAP2 and MYO16. In terms of tissue distribution, widely expressed.

It is found in the mitochondrion. The protein localises to the mitochondrion matrix. The protein resides in the mitochondrion inner membrane. The catalysed reaction is butanoyl-CoA + H2O = butanoate + CoA + H(+). It catalyses the reaction propanoyl-CoA + H2O = propanoate + CoA + H(+). The enzyme catalyses hexadecanoyl-CoA + H2O = hexadecanoate + CoA + H(+). It carries out the reaction octanoyl-CoA + H2O = octanoate + CoA + H(+). The catalysed reaction is decanoyl-CoA + H2O = decanoate + CoA + H(+). It catalyses the reaction tetradecanoyl-CoA + H2O = tetradecanoate + CoA + H(+). The enzyme catalyses 4,8-dimethylnonanoyl-CoA + H2O = 4,8-dimethylnonanoate + CoA + H(+). It carries out the reaction 3-methylbutanoyl-CoA + H2O = 3-methylbutanoate + CoA + H(+). The catalysed reaction is 2-methylpropanoyl-CoA + H2O = 2-methylpropanoate + CoA + H(+). Its pathway is lipid metabolism; fatty acid metabolism. Strongly inhibited by NADH and CoA. In terms of biological role, mitochondrial acyl-CoA thioesterase. Catalyzes the hydrolysis of acyl-CoAs into free fatty acids and coenzyme A (CoA), regulating their respective intracellular levels. Shows a clear preference for hydrophobic short-, medium-, and long-chain saturated acyl-CoAs with some activity also with short-chain dicarboxylic CoA esters. Regulates both mitochondrial lipid and amino acid metabolism. This Mus musculus (Mouse) protein is Acyl-coenzyme A thioesterase 9, mitochondrial (Acot9).